Here is a 408-residue protein sequence, read N- to C-terminus: Phosphopentomutase (408 aa).

The Mn(2+) site is built by D10, D307, H312, D348, H349, and H360.

It belongs to the phosphopentomutase family. Mn(2+) is required as a cofactor.

It localises to the cytoplasm. The catalysed reaction is 2-deoxy-alpha-D-ribose 1-phosphate = 2-deoxy-D-ribose 5-phosphate. It catalyses the reaction alpha-D-ribose 1-phosphate = D-ribose 5-phosphate. Its pathway is carbohydrate degradation; 2-deoxy-D-ribose 1-phosphate degradation; D-glyceraldehyde 3-phosphate and acetaldehyde from 2-deoxy-alpha-D-ribose 1-phosphate: step 1/2. Functionally, isomerase that catalyzes the conversion of deoxy-ribose 1-phosphate (dRib-1-P) and ribose 1-phosphate (Rib-1-P) to deoxy-ribose 5-phosphate (dRib-5-P) and ribose 5-phosphate (Rib-5-P), respectively. The polypeptide is Phosphopentomutase (Buchnera aphidicola subsp. Baizongia pistaciae (strain Bp)).